The following is a 198-amino-acid chain: Ribonuclease HII (198 aa).

The region spanning F3–P198 is the RNase H type-2 domain. A divalent metal cation contacts are provided by D9, E10, and D104.

This sequence belongs to the RNase HII family. Requires Mn(2+) as cofactor. The cofactor is Mg(2+).

It localises to the cytoplasm. It carries out the reaction Endonucleolytic cleavage to 5'-phosphomonoester.. Endonuclease that specifically degrades the RNA of RNA-DNA hybrids. This chain is Ribonuclease HII, found in Pyrobaculum neutrophilum (strain DSM 2338 / JCM 9278 / NBRC 100436 / V24Sta) (Thermoproteus neutrophilus).